The chain runs to 193 residues: Large ribosomal subunit protein eL18 (193 aa).

The disordered stretch occupies residues 158-193; sequence HFGAAGVPGSHAKPHVSSRGKERQRSSKRRHAFRHK. The segment covering 183–193 has biased composition (basic residues); sequence SSKRRHAFRHK.

This sequence belongs to the eukaryotic ribosomal protein eL18 family.

The protein resides in the cytoplasm. The sequence is that of Large ribosomal subunit protein eL18 (RPL18-A) from Trypanosoma brucei brucei (strain 927/4 GUTat10.1).